Reading from the N-terminus, the 100-residue chain is uncharacterized protein (100 aa).

This sequence belongs to the ycf15 family.

The protein resides in the plastid. It localises to the chloroplast. This is an uncharacterized protein from Panax ginseng (Korean ginseng).